The chain runs to 179 residues: Large ribosomal subunit protein uL5 (179 aa).

This sequence belongs to the universal ribosomal protein uL5 family. As to quaternary structure, part of the 50S ribosomal subunit; part of the 5S rRNA/L5/L18/L25 subcomplex. Contacts the 5S rRNA and the P site tRNA. Forms a bridge to the 30S subunit in the 70S ribosome.

Its function is as follows. This is one of the proteins that bind and probably mediate the attachment of the 5S RNA into the large ribosomal subunit, where it forms part of the central protuberance. In the 70S ribosome it contacts protein S13 of the 30S subunit (bridge B1b), connecting the 2 subunits; this bridge is implicated in subunit movement. Contacts the P site tRNA; the 5S rRNA and some of its associated proteins might help stabilize positioning of ribosome-bound tRNAs. This is Large ribosomal subunit protein uL5 from Vibrio atlanticus (strain LGP32) (Vibrio splendidus (strain Mel32)).